The sequence spans 411 residues: LL-diaminopimelate aminotransferase (411 aa).

Substrate-binding residues include Y15 and G42. Residues Y72, S108–K109, Y132, N187, Y218, and S246–S248 contribute to the pyridoxal 5'-phosphate site. Positions 109, 132, and 187 each coordinate substrate. The residue at position 249 (K249) is an N6-(pyridoxal phosphate)lysine. 2 residues coordinate pyridoxal 5'-phosphate: R257 and N292. Positions 292 and 388 each coordinate substrate.

The protein belongs to the class-I pyridoxal-phosphate-dependent aminotransferase family. LL-diaminopimelate aminotransferase subfamily. As to quaternary structure, homodimer. It depends on pyridoxal 5'-phosphate as a cofactor.

It catalyses the reaction (2S,6S)-2,6-diaminopimelate + 2-oxoglutarate = (S)-2,3,4,5-tetrahydrodipicolinate + L-glutamate + H2O + H(+). Its pathway is amino-acid biosynthesis; L-lysine biosynthesis via DAP pathway; LL-2,6-diaminopimelate from (S)-tetrahydrodipicolinate (aminotransferase route): step 1/1. Involved in the synthesis of meso-diaminopimelate (m-DAP or DL-DAP), required for both lysine and peptidoglycan biosynthesis. Catalyzes the direct conversion of tetrahydrodipicolinate to LL-diaminopimelate. This Gloeothece citriformis (strain PCC 7424) (Cyanothece sp. (strain PCC 7424)) protein is LL-diaminopimelate aminotransferase.